The following is a 190-amino-acid chain: MPVCNNDSQLIGLGVSVTLADDTTVNGTVYTYNSSEGLLVLFQGFSGSNPNVKIIRTPFIKEVTALRDNEEKLPPQLEAKARLPSMQAARDRSLFKHASSQLRNAKDKRNQLLQTDDQKTPIAALDTLIKLERIYPDIHWDKDAGVIRFNQDVVVKGKPDWTSPAVVIAEGAGDISRSLMERVQKTLSKK.

The Sm domain occupies 2-69 (PVCNNDSQLI…IKEVTALRDN (68 aa)). Residues 84–190 (PSMQAARDRS…ERVQKTLSKK (107 aa)) enclose the AD domain.

Belongs to the LSM12 family. Forms a complex composed of at least MKT1, PBP1, XAC1 and LSM12. Forms a complex composed of at least MKT1L, PBP1, XAC1 and LSM12. Within the complex, interacts with PBP1; the interaction is direct.

Functionally, involved in post-transcriptional regulation of gene expression. The protein is PBP1-interacting protein LSM12 of Trypanosoma brucei brucei (strain 927/4 GUTat10.1).